A 677-amino-acid polypeptide reads, in one-letter code: DNA ligase (677 aa).

NAD(+) is bound by residues 38–42, 87–88, and Glu119; these read DSVYD and SL. Lys121 (N6-AMP-lysine intermediate) is an active-site residue. Positions 142, 179, 296, and 320 each coordinate NAD(+). Positions 414, 417, 432, and 438 each coordinate Zn(2+). Positions 595 to 677 constitute a BRCT domain; the sequence is VVKSEIAGKT…LKLLKSKGVF (83 aa).

Belongs to the NAD-dependent DNA ligase family. LigA subfamily. The cofactor is Mg(2+). It depends on Mn(2+) as a cofactor.

The enzyme catalyses NAD(+) + (deoxyribonucleotide)n-3'-hydroxyl + 5'-phospho-(deoxyribonucleotide)m = (deoxyribonucleotide)n+m + AMP + beta-nicotinamide D-nucleotide.. Functionally, DNA ligase that catalyzes the formation of phosphodiester linkages between 5'-phosphoryl and 3'-hydroxyl groups in double-stranded DNA using NAD as a coenzyme and as the energy source for the reaction. It is essential for DNA replication and repair of damaged DNA. The protein is DNA ligase of Coxiella burnetii (strain CbuG_Q212) (Coxiella burnetii (strain Q212)).